We begin with the raw amino-acid sequence, 475 residues long: Ribulose bisphosphate carboxylase large chain (475 aa).

Residues 1 to 2 constitute a propeptide that is removed on maturation; that stretch reads MS. At proline 3 the chain carries N-acetylproline. The residue at position 14 (lysine 14) is an N6,N6,N6-trimethyllysine. Residues asparagine 123 and threonine 173 each coordinate substrate. Lysine 175 acts as the Proton acceptor in catalysis. Position 177 (lysine 177) interacts with substrate. The Mg(2+) site is built by lysine 201, aspartate 203, and glutamate 204. Lysine 201 carries the N6-carboxylysine modification. Catalysis depends on histidine 294, which acts as the Proton acceptor. 3 residues coordinate substrate: arginine 295, histidine 327, and serine 379.

This sequence belongs to the RuBisCO large chain family. Type I subfamily. In terms of assembly, heterohexadecamer of 8 large chains and 8 small chains; disulfide-linked. The disulfide link is formed within the large subunit homodimers. Mg(2+) serves as cofactor. Post-translationally, the disulfide bond which can form in the large chain dimeric partners within the hexadecamer appears to be associated with oxidative stress and protein turnover.

Its subcellular location is the plastid. It localises to the chloroplast. It carries out the reaction 2 (2R)-3-phosphoglycerate + 2 H(+) = D-ribulose 1,5-bisphosphate + CO2 + H2O. The enzyme catalyses D-ribulose 1,5-bisphosphate + O2 = 2-phosphoglycolate + (2R)-3-phosphoglycerate + 2 H(+). In terms of biological role, ruBisCO catalyzes two reactions: the carboxylation of D-ribulose 1,5-bisphosphate, the primary event in carbon dioxide fixation, as well as the oxidative fragmentation of the pentose substrate in the photorespiration process. Both reactions occur simultaneously and in competition at the same active site. The polypeptide is Ribulose bisphosphate carboxylase large chain (Tsuga heterophylla (Western hemlock)).